The chain runs to 174 residues: Type II restriction enzyme Bsp6I (174 aa).

It catalyses the reaction Endonucleolytic cleavage of DNA to give specific double-stranded fragments with terminal 5'-phosphates.. A P subtype restriction enzyme that recognizes the double-stranded sequence 5'-GCNGC-3' and cleaves after C-2. The polypeptide is Type II restriction enzyme Bsp6I (Bacillus sp. (strain RFL6)).